Consider the following 539-residue polypeptide: Acrosin-binding protein (539 aa).

An N-terminal signal peptide occupies residues 1–25; the sequence is MRQLAAGSLLSLLKVLLLPLAPAPA. The interval 26–106 is pro-ACR binding; sequence QDANSASTPG…ASWFESFCQF (81 aa). A propeptide spans 26–269 (removed in active form); it reads QDANSASTPG…NPFSFTPRVR (244 aa). The disordered stretch occupies residues 186-259; the sequence is LGGQEQGQEH…PKFQSEFVSS (74 aa). Residues 192–211 are compositionally biased toward basic and acidic residues; it reads GQEHKQEHKQEQGQEHKQDE. Residues 212–238 show a composition bias toward acidic residues; sequence GQEQEEQEEEQEEEGKQEEGQGTEESL. Residues 315–423 form a pro-ACR binding region; sequence LPHVDALLVL…TQIGTLKSGR (109 aa).

Binds specifically to the 55- and 53-kDa proacrosins and the 49-kDa acrosin intermediate, but is not capable of binding 43-kDa acrosin intermediate and 32-kDa mature acrosin. In terms of processing, the N-terminus is blocked. Synthesized as a 60-kDa precursor, the 35-kDa mature form is post-translationally produced by the removal of the N-terminal half of the precursor during sperm maturation in the testis and/or epididymis. Post-translationally, phosphorylated on Tyr residues in capacitated sperm. In terms of tissue distribution, specifically expressed in testis.

The protein localises to the secreted. It is found in the cytoplasmic vesicle. The protein resides in the secretory vesicle. It localises to the acrosome. Its function is as follows. Acrosomal protein that maintains proacrosin (pro-ACR) as an enzymatically inactive zymogen in the acrosome. Involved also in the acrosome formation. In Sus scrofa (Pig), this protein is Acrosin-binding protein.